The sequence spans 364 residues: Medium-wave-sensitive opsin 1 (364 aa).

The tract at residues 1–23 (MTQPWGPQMLAGGQPPESHEDST) is disordered. At 1–52 (MTQPWGPQMLAGGQPPESHEDSTQASIFTYTNSNSTRGPFEGPNFHIAPRWV) the chain is on the extracellular side. A required for 11-cis-retinal regeneration region spans residues 17 to 43 (ESHEDSTQASIFTYTNSNSTRGPFEGP). Asparagine 34 carries an N-linked (GlcNAc...) asparagine glycan. Residues 53–77 (YHLTSAWMILVVIASVFTNGLVLVA) form a helical membrane-spanning segment. Residues 78 to 89 (TMRFKKLRHPLN) lie on the Cytoplasmic side of the membrane. A helical membrane pass occupies residues 90-115 (WILVNLAVADLAETVIASTISVVNQF). Residues 116-129 (YGYFVLGHPLCVVE) lie on the Extracellular side of the membrane. Cysteines 126 and 203 form a disulfide. Residues 130 to 149 (GYTVSLCGITGLWSLAIISW) traverse the membrane as a helical segment. Over 150–168 (ERWLVVCKPFGNVRFDAKL) the chain is Cytoplasmic. A helical membrane pass occupies residues 169–192 (AIAGIAFSWIWAAVWTAPPIFGWS). At 193 to 218 (RYWPYGLKTSCGPDVFSGTSYPGVQS) the chain is on the extracellular side. The chain crosses the membrane as a helical span at residues 219–246 (YMMVLMVTCCIIPLSVIVLCYLQVWMAI). The Cytoplasmic portion of the chain corresponds to 247-268 (RTVAKQQKESESTQKAEKEVTR). The chain crosses the membrane as a helical span at residues 269-292 (MVVVMVFAYCLCWGPYTFFACFAT). The Extracellular segment spans residues 293–300 (AHPGYSFH). The chain crosses the membrane as a helical span at residues 301–325 (PLVAAIPSYFAKSATIYNPIIYVFM). N6-(retinylidene)lysine is present on lysine 312. Residues 326–364 (NRQFRNCILQLFGKKVEDSSELSSASRTEASSVSSVSPA) lie on the Cytoplasmic side of the membrane.

This sequence belongs to the G-protein coupled receptor 1 family. Opsin subfamily. In terms of assembly, monomer. Homodimer. Homotetramer. Post-translationally, O-glycosylated. In terms of processing, phosphorylated on some or all of the serine and threonine residues present in the C-terminal region. Expressed in cone photoreceptor cells.

The protein resides in the membrane. Its function is as follows. Visual pigments are the light-absorbing molecules that mediate vision. They consist of an apoprotein, opsin, covalently linked to cis-retinal. May increase spectral sensitivity in dim light. The protein is Medium-wave-sensitive opsin 1 (OPN1MW) of Oryctolagus cuniculus (Rabbit).